The primary structure comprises 432 residues: Putative D-alanyl-D-alanine carboxypeptidase (432 aa).

The chain crosses the membrane as a helical; Signal-anchor span at residues 7–25 (ATVLLTFSLSAFAVEYPVL).

This sequence belongs to the peptidase S12 family. YfeW subfamily.

The protein localises to the cell inner membrane. It carries out the reaction Preferential cleavage: (Ac)2-L-Lys-D-Ala-|-D-Ala. Also transpeptidation of peptidyl-alanyl moieties that are N-acyl substituents of D-alanine.. This chain is Putative D-alanyl-D-alanine carboxypeptidase, found in Salmonella heidelberg (strain SL476).